We begin with the raw amino-acid sequence, 176 residues long: Sperm-egg fusion protein TMEM95 (176 aa).

An N-terminal signal peptide occupies residues 1-16 (MWRLALGGVFLAAAQA). 4 cysteine pairs are disulfide-bonded: Cys-17–Cys-118, Cys-20–Cys-121, Cys-105–Cys-128, and Cys-109–Cys-134. Topologically, residues 17–145 (CVFCRLPAHD…PGSQDLWEAK (129 aa)) are extracellular. Residues 146 to 166 (ILLLSIFGAFLLLGVLSLLVE) form a helical membrane-spanning segment. Residues 167 to 176 (SHHLQAKSGL) are Cytoplasmic-facing.

This sequence belongs to the TMEM95 family. As to quaternary structure, does not interact with sperm-egg fusion proteins IZUMO1 or IZUMO1R/JUNO. Post-translationally, N-glycosylated. In terms of tissue distribution, spermatozoa (at protein level).

The protein localises to the cytoplasmic vesicle. Its subcellular location is the secretory vesicle. The protein resides in the acrosome membrane. In terms of biological role, sperm protein required for fusion of sperm with the egg membrane during fertilization. This Homo sapiens (Human) protein is Sperm-egg fusion protein TMEM95.